The following is a 331-amino-acid chain: Proton-translocating ferredoxin:NAD(+) oxidoreductase complex subunit D (331 aa).

3 helical membrane passes run 23-43 (ESVSKIMWSVCLALTPAAVFG), 44-64 (VFNFGIHALEVIITGIIAAVV), and 84-106 (AFLTGLLLSMCLPPDIPPYMVAI). T163 is modified (FMN phosphoryl threonine). 4 helical membrane-spanning segments follow: residues 196–216 (NGSIGETSTILLVLGGLYLIY), 226–246 (VVMIGTVGILTWAFGGTTGIF), 251–271 (VFHMMAGGLVIGAFFMATDMV), and 273–293 (IPMTIKGQIIFALGAGALTSL).

It belongs to the NqrB/RnfD family. As to quaternary structure, the complex is composed of six subunits: RnfA, RnfB, RnfC, RnfD, RnfE and RnfG. FMN is required as a cofactor.

The protein localises to the cell membrane. Its function is as follows. Part of a membrane-bound complex that couples electron transfer with translocation of ions across the membrane. Couples electron transfer from reduced ferredoxin to NAD(+) with translocation of H(+) out of the cell. Essential for energy conservation during autotrophic growth. Contributes to ATP synthesis during heterotrophic growth. This chain is Proton-translocating ferredoxin:NAD(+) oxidoreductase complex subunit D, found in Clostridium ljungdahlii (strain ATCC 55383 / DSM 13528 / PETC).